Consider the following 371-residue polypeptide: Outer membrane protein P2 (371 aa).

The signal sequence occupies residues 1-20 (MKKTLAALIVGAFAASAANA).

It belongs to the Gram-negative porin family. Homotrimer.

Its subcellular location is the cell outer membrane. Its function is as follows. Forms pores that allow passive diffusion of small molecules across the outer membrane. The sequence is that of Outer membrane protein P2 (ompP2) from Haemophilus influenzae.